A 421-amino-acid chain; its full sequence is Glutamate-1-semialdehyde 2,1-aminomutase 1 (421 aa).

Lysine 258 is subject to N6-(pyridoxal phosphate)lysine.

It belongs to the class-III pyridoxal-phosphate-dependent aminotransferase family. HemL subfamily. The cofactor is pyridoxal 5'-phosphate.

The protein localises to the cytoplasm. It catalyses the reaction (S)-4-amino-5-oxopentanoate = 5-aminolevulinate. Its pathway is porphyrin-containing compound metabolism; protoporphyrin-IX biosynthesis; 5-aminolevulinate from L-glutamyl-tRNA(Glu): step 2/2. The polypeptide is Glutamate-1-semialdehyde 2,1-aminomutase 1 (Cenarchaeum symbiosum (strain A)).